A 236-amino-acid chain; its full sequence is Potassium/proton antiporter CemA (236 aa).

Helical transmembrane passes span 12-32 (TVTSIKYFISFILFVLITNHV), 114-134 (IANVFADLLSLCIFVLALLLG), 161-181 (IILFTDIFVGFHSSHGWEILI), and 196-216 (FIFLFVATFPVVLDTVFKYWI).

It belongs to the CemA family.

It is found in the plastid. Its subcellular location is the chloroplast inner membrane. It catalyses the reaction K(+)(in) + H(+)(out) = K(+)(out) + H(+)(in). Contributes to K(+)/H(+) antiport activity by supporting proton efflux to control proton extrusion and homeostasis in chloroplasts in a light-dependent manner to modulate photosynthesis. Prevents excessive induction of non-photochemical quenching (NPQ) under continuous-light conditions. Indirectly promotes efficient inorganic carbon uptake into chloroplasts. The protein is Potassium/proton antiporter CemA of Chlorokybus atmophyticus (Soil alga).